Consider the following 239-residue polypeptide: Leucyl/phenylalanyl-tRNA--protein transferase (239 aa).

It belongs to the L/F-transferase family.

Its subcellular location is the cytoplasm. The enzyme catalyses N-terminal L-lysyl-[protein] + L-leucyl-tRNA(Leu) = N-terminal L-leucyl-L-lysyl-[protein] + tRNA(Leu) + H(+). It carries out the reaction N-terminal L-arginyl-[protein] + L-leucyl-tRNA(Leu) = N-terminal L-leucyl-L-arginyl-[protein] + tRNA(Leu) + H(+). The catalysed reaction is L-phenylalanyl-tRNA(Phe) + an N-terminal L-alpha-aminoacyl-[protein] = an N-terminal L-phenylalanyl-L-alpha-aminoacyl-[protein] + tRNA(Phe). Functions in the N-end rule pathway of protein degradation where it conjugates Leu, Phe and, less efficiently, Met from aminoacyl-tRNAs to the N-termini of proteins containing an N-terminal arginine or lysine. The sequence is that of Leucyl/phenylalanyl-tRNA--protein transferase from Aliivibrio fischeri (strain ATCC 700601 / ES114) (Vibrio fischeri).